The sequence spans 1834 residues: Non-reducing polyketide synthase spyA (1834 aa).

The 165-residue stretch at 91–255 (LAPLTVIIHL…TRIPIYGRYH (165 aa)) folds into the Starter acyltransferase (SAT) domain. The 417-residue stretch at 385-801 (EHSIAVIGAA…GNNTAVIVCE (417 aa)) folds into the Ketosynthase family 3 (KS3) domain. Active-site for beta-ketoacyl synthase activity residues include Cys551, His687, and His724. One can recognise a Malonyl-CoA:ACP transacylase (MAT) domain in the interval 919 to 1164 (YEGSSLLRSH…KELGPCTWVE (246 aa)). An N-terminal hotdog fold region spans residues 1269–1398 (PLVYLLRDEG…GVISLRQERH (130 aa)). One can recognise a PKS/mFAS DH domain in the interval 1269 to 1577 (PLVYLLRDEG…FVRITASSLN (309 aa)). A product template (PT) domain region spans residues 1269–1577 (PLVYLLRDEG…FVRITASSLN (309 aa)). A C-terminal hotdog fold region spans residues 1428–1577 (AISLKEGIIY…FVRITASSLN (150 aa)). The Carrier 1 domain occupies 1616-1690 (SDILSILSHL…TLCQEIQTQR (75 aa)). Ser1650 is modified (O-(pantetheine 4'-phosphoryl)serine). Positions 1693-1720 (RLARASRTTTATRNTSFSLGRRTSSTES) are disordered. The span at 1697–1710 (ASRTTTATRNTSFS) shows a compositional bias: low complexity. The Carrier 2 domain occupies 1731–1807 (SKSAAVLAQL…GLARLILASE (77 aa)). The residue at position 1767 (Ser1767) is an O-(pantetheine 4'-phosphoryl)serine.

Pantetheine 4'-phosphate serves as cofactor.

The catalysed reaction is 2 malonyl-CoA + acetyl-CoA + 2 H(+) = triacetate lactone + 2 CO2 + 3 CoA. It functions in the pathway secondary metabolite biosynthesis; terpenoid biosynthesis. Its function is as follows. Non-reducing polyketide synthase; part of the gene cluster that mediates the biosynthesis of meroterpenoids called sartorypyrones. The biosynthesis of sartorypyrones begins with the production of triacetic acid lactone (TAL) by the NR-PKS spyA using one molecule of acetyl-CoA and two molecules of malonyl-CoA. As spyA lacks a thioesterase (TE) domain, TAL is likely generated through self-release from spyA by spontaneous lactonization. After production of TAL, the prenyltransferase spyF then conjugates geranylgeranyl pyrophosphate (GGPP) to TAL to form geranylgeranyl-triacetate lactone, for which the pathway-specific geranylgeranyl pyrophosphate synthase (GGPS) spyE is required to provide GGPP. Subsequently, geranylgeranyl-triacetate lactone is epoxidized at the terminal olein by the FAD-dependent monooxygenase spyC, followed by cyclization of the terpenoid component catalyzed by the terpene cyclase spyD to produce both the bicyclic sartorypyrone F and the monocyclic sartorypyrone D. Finally, the last step of the biosynthesis involves the acetylation of the meroterpenoids sartorypyrones D and F by the acetyltransferase SpyB to produce sartorypyrones A and G, respectively. The protein is Non-reducing polyketide synthase spyA of Aspergillus fumigatus (strain ATCC MYA-4609 / CBS 101355 / FGSC A1100 / Af293) (Neosartorya fumigata).